Here is a 105-residue protein sequence, read N- to C-terminus: DNA-directed RNA polymerases I and III subunit RPAC2 (105 aa).

It belongs to the archaeal Rpo11/eukaryotic RPB11/RPC19 RNA polymerase subunit family. Component of the RNA polymerase I (Pol I) and RNA polymerase III (Pol III) complexes consisting of at least 13 and 17 subunits, respectively.

The protein localises to the nucleus. DNA-dependent RNA polymerase catalyzes the transcription of DNA into RNA using the four ribonucleoside triphosphates as substrates. Common core component of RNA polymerases I and III which synthesize ribosomal RNA precursors and small RNAs, such as 5S rRNA and tRNAs, respectively. The protein is DNA-directed RNA polymerases I and III subunit RPAC2 of Drosophila melanogaster (Fruit fly).